A 629-amino-acid chain; its full sequence is Probable alpha-L-arabinofuranosidase A (629 aa).

Positions 1-25 are cleaved as a signal peptide; that stretch reads MVALSTLSGLSALPFLFSLVQNVYG. N-linked (GlcNAc...) asparagine glycans are attached at residues Asn36, Asn51, Asn140, Asn152, Asn168, Asn171, Asn260, Asn494, and Asn534.

The protein belongs to the glycosyl hydrolase 51 family.

It is found in the secreted. It catalyses the reaction Hydrolysis of terminal non-reducing alpha-L-arabinofuranoside residues in alpha-L-arabinosides.. The protein operates within glycan metabolism; L-arabinan degradation. Functionally, alpha-L-arabinofuranosidase involved in the degradation of arabinoxylan, a major component of plant hemicellulose. Acts only on small linear 1,5-alpha-linked L-arabinofuranosyl oligosaccharides. This Aspergillus oryzae (strain ATCC 42149 / RIB 40) (Yellow koji mold) protein is Probable alpha-L-arabinofuranosidase A (abfA).